Here is a 201-residue protein sequence, read N- to C-terminus: Protein tirC (201 aa).

The TIR domain occupies 52-186 (ERIKVFIVHG…YVWINYTEDL (135 aa)).

The protein is Protein tirC (tirC) of Dictyostelium discoideum (Social amoeba).